Here is a 92-residue protein sequence, read N- to C-terminus: Phospholemman (92 aa).

The N-terminal stretch at 1–20 (MASLGHILVFCVGLLTMAKA) is a signal peptide. Residues 21–35 (ESPKEHDPFTYDYQS) are Extracellular-facing. Residues 36 to 56 (LQIGGLVIAGILFILGILIVL) traverse the membrane as a helical segment. The Cytoplasmic portion of the chain corresponds to 57-92 (SRRCRCKFNQQQRTGEPDEEEGTFRSSIRRLSTRRR). The S-palmitoyl cysteine moiety is linked to residue Cys60. Cys62 is subject to S-glutathionyl cysteine; alternate. Residue Cys62 is the site of S-palmitoyl cysteine; alternate attachment. Residues 65–92 (NQQQRTGEPDEEEGTFRSSIRRLSTRRR) form a disordered region. Thr79 carries the phosphothreonine modification. Ser82 carries the post-translational modification Phosphoserine. Ser83 is modified (phosphoserine; by PKA and PKC). Basic residues predominate over residues 83-92 (SIRRLSTRRR). At Ser88 the chain carries Phosphoserine; by PKA. The residue at position 89 (Thr89) is a Phosphothreonine; by PKC.

It belongs to the FXYD family. In terms of assembly, homotetramer. Monomer. Regulatory subunit of the sodium/potassium-transporting ATPase (NKA) which is composed of a catalytic alpha subunit, an auxiliary non-catalytic beta subunit and an additional regulatory subunit. The monomeric form associates with NKA while the oligomeric form does not. Interacts with the catalytic alpha-1 subunit ATP1A1. Also interacts with the catalytic alpha-2 and alpha-3 subunits ATP1A2 and ATP1A3. Very little interaction with ATP1A1, ATP1A2 or ATP1A3 when phosphorylated at Ser-83. Interacts with the non-catalytic beta-1 subunit ATP1B1. Oxidative stress decreases interaction with ATP1A1 but increases interaction with ATP1B1. Major plasma membrane substrate for cAMP-dependent protein kinase (PKA) and protein kinase C (PKC) in several different tissues. Phosphorylated in response to insulin and adrenergic stimulation. Phosphorylation at Ser-88 stimulates sodium/potassium-transporting ATPase activity while the unphosphorylated form inhibits sodium/potassium-transporting ATPase activity. Phosphorylation increases tetramerization, decreases binding to ATP1A1 and reduces inhibition of ATP1A1 activity. Phosphorylation at Ser-83 leads to greatly reduced interaction with ATP1A1, ATP1A2 and ATP1A3. May be phosphorylated by DMPK. Post-translationally, palmitoylation increases half-life and stability and is enhanced upon phosphorylation at Ser-88 by PKA. In terms of tissue distribution, highest expression in skeletal muscle and heart. Moderate levels in brain, placenta, lung, liver, pancreas, uterus, bladder, prostate, small intestine and colon with mucosal lining. Very low levels in kidney, colon and small intestine without mucosa, prostate without endothelial lining, spleen, and testis.

It localises to the cell membrane. Its subcellular location is the sarcolemma. The protein localises to the apical cell membrane. It is found in the membrane. The protein resides in the caveola. It localises to the T-tubule. Associates with and regulates the activity of the sodium/potassium-transporting ATPase (NKA) which transports Na(+) out of the cell and K(+) into the cell. Inhibits NKA activity in its unphosphorylated state and stimulates activity when phosphorylated. Reduces glutathionylation of the NKA beta-1 subunit ATP1B1, thus reversing glutathionylation-mediated inhibition of ATP1B1. Contributes to female sexual development by maintaining the excitability of neurons which secrete gonadotropin-releasing hormone. This is Phospholemman from Homo sapiens (Human).